A 915-amino-acid polypeptide reads, in one-letter code: Probable dipeptidyl-aminopeptidase B (915 aa).

Disordered stretches follow at residues methionine 1–serine 20 and glutamine 52–glutamate 74. Residues methionine 1–lysine 95 are Cytoplasmic-facing. The segment covering arginine 55–glutamate 72 has biased composition (basic and acidic residues). A helical; Signal-anchor for type II membrane protein transmembrane segment spans residues isoleucine 96–phenylalanine 116. The Vacuolar portion of the chain corresponds to leucine 117–valine 915. N-linked (GlcNAc...) asparagine glycans are attached at residues asparagine 133, asparagine 179, asparagine 349, and asparagine 572. The active-site Charge relay system is serine 754. N-linked (GlcNAc...) asparagine glycosylation occurs at asparagine 813. Residues aspartate 831 and histidine 864 each act as charge relay system in the active site. N-linked (GlcNAc...) asparagine glycosylation is present at asparagine 900.

Belongs to the peptidase S9B family.

The protein resides in the vacuole membrane. The enzyme catalyses Release of an N-terminal dipeptide, Xaa-Yaa-|-Zaa-, from a polypeptide, preferentially when Yaa is Pro, provided Zaa is neither Pro nor hydroxyproline.. Functionally, type IV dipeptidyl-peptidase which removes N-terminal dipeptides sequentially from polypeptides having unsubstituted N-termini provided that the penultimate residue is proline. This Blastomyces gilchristii (strain SLH14081) (Blastomyces dermatitidis) protein is Probable dipeptidyl-aminopeptidase B (DAPB).